The primary structure comprises 200 residues: Cysteine-rich venom protein VAR8 (200 aa).

The N-terminal stretch at 1-22 (MILLKLYLTLAAILCQSRGTTS) is a signal peptide. In terms of domain architecture, SCP spans 41–169 (NKHNDLRRTV…PLKYFLVCQY (129 aa)). Disulfide bonds link C77/C156, C95/C170, C151/C167, and C189/C196.

This sequence belongs to the CRISP family. In terms of processing, contains 8 disulfide bonds. As to expression, expressed by the venom gland.

It is found in the secreted. In terms of biological role, blocks ryanodine receptors, and potassium channels. This chain is Cysteine-rich venom protein VAR8, found in Varanus acanthurus (Ridge-tailed monitor).